The primary structure comprises 446 residues: Tubulin beta-2 chain (446 aa).

GTP contacts are provided by Gln11, Glu69, Ser138, Gly142, Thr143, Gly144, Asn204, and Asn226. A Mg(2+)-binding site is contributed by Glu69. Residues 424–446 (QYQEATADEEGEFDEDEEGGGDE) are disordered. Positions 429–446 (TADEEGEFDEDEEGGGDE) are enriched in acidic residues.

This sequence belongs to the tubulin family. Dimer of alpha and beta chains. A typical microtubule is a hollow water-filled tube with an outer diameter of 25 nm and an inner diameter of 15 nM. Alpha-beta heterodimers associate head-to-tail to form protofilaments running lengthwise along the microtubule wall with the beta-tubulin subunit facing the microtubule plus end conferring a structural polarity. Microtubules usually have 13 protofilaments but different protofilament numbers can be found in some organisms and specialized cells. Mg(2+) is required as a cofactor. As to expression, testis specific.

The protein localises to the cytoplasm. Its subcellular location is the cytoskeleton. Tubulin is the major constituent of microtubules, a cylinder consisting of laterally associated linear protofilaments composed of alpha- and beta-tubulin heterodimers. Microtubules grow by the addition of GTP-tubulin dimers to the microtubule end, where a stabilizing cap forms. Below the cap, tubulin dimers are in GDP-bound state, owing to GTPase activity of alpha-tubulin. This Drosophila melanogaster (Fruit fly) protein is Tubulin beta-2 chain (betaTub85D).